The chain runs to 298 residues: Osmoprotective compounds uptake permease protein GgtD (298 aa).

A run of 7 helical transmembrane segments spans residues 26 to 46 (IHIA…GLFI), 97 to 117 (IAVP…YAFA), 126 to 146 (LLFI…LIPV), 158 to 178 (TFLG…IYLL), 207 to 227 (LIVP…FLWV), 231 to 251 (LLVA…TIQL), and 263 to 283 (YLLT…FFGL). The ABC transmembrane type-1 domain maps to 91–283 (FLNSLTIAVP…IVPLMVFFGL (193 aa)).

The protein belongs to the binding-protein-dependent transport system permease family. The complex is composed of two ATP-binding proteins (GgtA), two transmembrane proteins (GgtC and GgtD) and a solute-binding protein (GgtB).

Its subcellular location is the cell membrane. Part of the ABC transporter complex GgtABCD involved in the uptake of the osmoprotective compounds glucosylglycerol (GG), sucrose and trehalose. Responsible for the translocation of the substrate across the membrane. This is Osmoprotective compounds uptake permease protein GgtD from Synechocystis sp. (strain ATCC 27184 / PCC 6803 / Kazusa).